The primary structure comprises 631 residues: Probable G-protein coupled receptor 153 (631 aa).

At 1 to 11 (MSDERRLPSSA) the chain is on the extracellular side. Residues 12-32 (VGWLACGGLSLLANAWGILSV) traverse the membrane as a helical segment. The Cytoplasmic segment spans residues 33-41 (GAKQKKWKP). A helical transmembrane segment spans residues 42–62 (LEFLLCTLAATHMLNVAVPIA). The Extracellular segment spans residues 63-84 (TYAVVQLRRQRPDYEWNEGLCK). A helical membrane pass occupies residues 85–105 (VFVSTFYTLTLATCFSVTSIS). Residues 106 to 126 (YHRMWMVRWPVNYRLSNAKKQ) are Cytoplasmic-facing. The helical transmembrane segment at 127–147 (AVHTVMGIWMVSFILSALPAV) threads the bilayer. Topologically, residues 148–162 (GWHDTSERFYTHGCR) are extracellular. Residues 163–183 (FIVAEIGLGFGVCFLLLVGGS) traverse the membrane as a helical segment. The Cytoplasmic segment spans residues 184–243 (VAMGMVCTAIALFQTLATQVGHRADRRTFTVPTIVVEDAQGKRRSSIDGSEPARTSLQIT). Residues 244–264 (GLVATIVVIYDCLMGFPVLVV) traverse the membrane as a helical segment. Topologically, residues 265–276 (SFSSLRADASAP) are extracellular. Residues 277–297 (WMALCVLWCSVTQALLLPLFL) form a helical membrane-spanning segment. The Cytoplasmic portion of the chain corresponds to 298-631 (WTCDRYRADL…LHSDSLGSAS (334 aa)). 3 disordered regions span residues 486 to 518 (LQPS…RSAS), 546 to 590 (QPFP…SLSA), and 603 to 631 (CGSI…GSAS). Low complexity predominate over residues 605-617 (SISSFLSSPSESS).

Belongs to the G-protein coupled receptor 1 family.

The protein localises to the cell membrane. Functionally, orphan receptor. This chain is Probable G-protein coupled receptor 153 (Gpr153), found in Mus musculus (Mouse).